A 634-amino-acid polypeptide reads, in one-letter code: Probable potassium transport system protein Kup (634 aa).

12 helical membrane-spanning segments follow: residues 19–39 (AVGL…TSPL), 62–82 (VLSL…VIFV), 113–133 (FVVV…MITP), 150–170 (GLEH…FLIQ), 177–197 (IGIL…ALGV), 225–245 (IGVA…ALYA), 259–279 (WFLL…ATIL), 291–311 (LLAP…ATVI), 349–369 (IYIG…VLGF), 379–399 (YGVA…VVIW), 406–426 (LWLG…FFAA), and 431–451 (VVQG…LMST).

It belongs to the HAK/KUP transporter (TC 2.A.72) family.

It localises to the cell inner membrane. The catalysed reaction is K(+)(in) + H(+)(in) = K(+)(out) + H(+)(out). Transport of potassium into the cell. Likely operates as a K(+):H(+) symporter. The sequence is that of Probable potassium transport system protein Kup from Pseudomonas paraeruginosa (strain DSM 24068 / PA7) (Pseudomonas aeruginosa (strain PA7)).